The primary structure comprises 430 residues: Adenylosuccinate synthetase (430 aa).

Residues 12–18 and 40–42 contribute to the GTP site; these read GDEGKGK and GHT. The active-site Proton acceptor is aspartate 13. Residues aspartate 13 and glycine 40 each coordinate Mg(2+). Residues 13–16, 38–41, threonine 130, arginine 144, glutamine 224, threonine 239, and arginine 303 each bind IMP; these read DEGK and NAGH. Residue histidine 41 is the Proton donor of the active site. A substrate-binding site is contributed by 299 to 305; it reads TNTGRAR. GTP contacts are provided by residues arginine 305, 331–333, and 413–415; these read KLD and STS.

This sequence belongs to the adenylosuccinate synthetase family. As to quaternary structure, homodimer. Mg(2+) serves as cofactor.

The protein localises to the cytoplasm. The enzyme catalyses IMP + L-aspartate + GTP = N(6)-(1,2-dicarboxyethyl)-AMP + GDP + phosphate + 2 H(+). It participates in purine metabolism; AMP biosynthesis via de novo pathway; AMP from IMP: step 1/2. In terms of biological role, plays an important role in the de novo pathway of purine nucleotide biosynthesis. Catalyzes the first committed step in the biosynthesis of AMP from IMP. The sequence is that of Adenylosuccinate synthetase from Hyphomonas neptunium (strain ATCC 15444).